The sequence spans 434 residues: ATP-dependent RNA helicase RhlB (434 aa).

The short motif at Lys9–Ala37 is the Q motif element. One can recognise a Helicase ATP-binding domain in the interval Leu40–Val219. An ATP-binding site is contributed by Ala53–Thr60. The DEAD box motif lies at Asp165–Asp168. Positions Lys243–Leu390 constitute a Helicase C-terminal domain. The disordered stretch occupies residues Leu390–Pro434.

Belongs to the DEAD box helicase family. RhlB subfamily. As to quaternary structure, component of the RNA degradosome, which is a multiprotein complex involved in RNA processing and mRNA degradation.

Its subcellular location is the cytoplasm. It carries out the reaction ATP + H2O = ADP + phosphate + H(+). Functionally, DEAD-box RNA helicase involved in RNA degradation. Has RNA-dependent ATPase activity and unwinds double-stranded RNA. In Shewanella frigidimarina (strain NCIMB 400), this protein is ATP-dependent RNA helicase RhlB.